We begin with the raw amino-acid sequence, 339 residues long: Ketol-acid reductoisomerase (NADP(+)) (339 aa).

Residues 1–182 (MRVYYDRDAD…GGGRAGIIET (182 aa)) form the KARI N-terminal Rossmann domain. NADP(+) contacts are provided by residues 24-27 (YGSQ), R48, S51, T53, and 83-86 (DELQ). H108 is a catalytic residue. G134 is a binding site for NADP(+). The KARI C-terminal knotted domain occupies 183 to 328 (TFKEECETDL…AKLRGMMPWI (146 aa)). Residues D191, E195, E227, and E231 each contribute to the Mg(2+) site. Substrate is bound at residue S252.

It belongs to the ketol-acid reductoisomerase family. Mg(2+) serves as cofactor.

The enzyme catalyses (2R)-2,3-dihydroxy-3-methylbutanoate + NADP(+) = (2S)-2-acetolactate + NADPH + H(+). The catalysed reaction is (2R,3R)-2,3-dihydroxy-3-methylpentanoate + NADP(+) = (S)-2-ethyl-2-hydroxy-3-oxobutanoate + NADPH + H(+). Its pathway is amino-acid biosynthesis; L-isoleucine biosynthesis; L-isoleucine from 2-oxobutanoate: step 2/4. It functions in the pathway amino-acid biosynthesis; L-valine biosynthesis; L-valine from pyruvate: step 2/4. Functionally, involved in the biosynthesis of branched-chain amino acids (BCAA). Catalyzes an alkyl-migration followed by a ketol-acid reduction of (S)-2-acetolactate (S2AL) to yield (R)-2,3-dihydroxy-isovalerate. In the isomerase reaction, S2AL is rearranged via a Mg-dependent methyl migration to produce 3-hydroxy-3-methyl-2-ketobutyrate (HMKB). In the reductase reaction, this 2-ketoacid undergoes a metal-dependent reduction by NADPH to yield (R)-2,3-dihydroxy-isovalerate. In Methylorubrum populi (strain ATCC BAA-705 / NCIMB 13946 / BJ001) (Methylobacterium populi), this protein is Ketol-acid reductoisomerase (NADP(+)).